The primary structure comprises 96 residues: Cysteine protease immunity 1 (96 aa).

This chain is Cysteine protease immunity 1, found in Escherichia coli O1:K1:H7 (strain ATCC 11775 / DSM 30083 / JCM 1649 / NBRC 102203 / NCTC 9001 / U5/41).